The sequence spans 387 residues: Formate-dependent phosphoribosylglycinamide formyltransferase (387 aa).

N(1)-(5-phospho-beta-D-ribosyl)glycinamide is bound by residues 21–22 (EL) and glutamate 81. ATP-binding positions include arginine 113, lysine 154, 159–164 (SSGHGQ), 193–196 (EEFI), and glutamate 201. The region spanning 118–306 (TFAAEEVGVK…EFALHLRAVL (189 aa)) is the ATP-grasp domain. Glutamate 265 and glutamate 277 together coordinate Mg(2+). Residues aspartate 284, lysine 352, and 359 to 360 (RR) contribute to the N(1)-(5-phospho-beta-D-ribosyl)glycinamide site.

The protein belongs to the PurK/PurT family. As to quaternary structure, homodimer.

It catalyses the reaction N(1)-(5-phospho-beta-D-ribosyl)glycinamide + formate + ATP = N(2)-formyl-N(1)-(5-phospho-beta-D-ribosyl)glycinamide + ADP + phosphate + H(+). It functions in the pathway purine metabolism; IMP biosynthesis via de novo pathway; N(2)-formyl-N(1)-(5-phospho-D-ribosyl)glycinamide from N(1)-(5-phospho-D-ribosyl)glycinamide (formate route): step 1/1. Its function is as follows. Involved in the de novo purine biosynthesis. Catalyzes the transfer of formate to 5-phospho-ribosyl-glycinamide (GAR), producing 5-phospho-ribosyl-N-formylglycinamide (FGAR). Formate is provided by PurU via hydrolysis of 10-formyl-tetrahydrofolate. The chain is Formate-dependent phosphoribosylglycinamide formyltransferase from Wolinella succinogenes (strain ATCC 29543 / DSM 1740 / CCUG 13145 / JCM 31913 / LMG 7466 / NCTC 11488 / FDC 602W) (Vibrio succinogenes).